Consider the following 375-residue polypeptide: Acetylornithine aminotransferase (375 aa).

Pyridoxal 5'-phosphate contacts are provided by residues 93 to 94 (GT) and Phe-120. Arg-123 is a N(2)-acetyl-L-ornithine binding site. 205–208 (DEVQ) contributes to the pyridoxal 5'-phosphate binding site. Lys-234 is subject to N6-(pyridoxal phosphate)lysine. Thr-262 is a binding site for N(2)-acetyl-L-ornithine. Thr-263 contacts pyridoxal 5'-phosphate.

This sequence belongs to the class-III pyridoxal-phosphate-dependent aminotransferase family. ArgD subfamily. In terms of assembly, homodimer. Pyridoxal 5'-phosphate serves as cofactor.

Its subcellular location is the cytoplasm. It carries out the reaction N(2)-acetyl-L-ornithine + 2-oxoglutarate = N-acetyl-L-glutamate 5-semialdehyde + L-glutamate. It functions in the pathway amino-acid biosynthesis; L-arginine biosynthesis; N(2)-acetyl-L-ornithine from L-glutamate: step 4/4. This chain is Acetylornithine aminotransferase, found in Staphylococcus epidermidis (strain ATCC 35984 / DSM 28319 / BCRC 17069 / CCUG 31568 / BM 3577 / RP62A).